The following is a 600-amino-acid chain: Isocitrate dehydrogenase kinase/phosphatase (600 aa).

ATP-binding positions include 335 to 341 (APGIRGM) and Lys-356. Asp-390 is an active-site residue.

The protein belongs to the AceK family.

It is found in the cytoplasm. It carries out the reaction L-seryl-[isocitrate dehydrogenase] + ATP = O-phospho-L-seryl-[isocitrate dehydrogenase] + ADP + H(+). Bifunctional enzyme which can phosphorylate or dephosphorylate isocitrate dehydrogenase (IDH) on a specific serine residue. This is a regulatory mechanism which enables bacteria to bypass the Krebs cycle via the glyoxylate shunt in response to the source of carbon. When bacteria are grown on glucose, IDH is fully active and unphosphorylated, but when grown on acetate or ethanol, the activity of IDH declines drastically concomitant with its phosphorylation. In Bordetella parapertussis (strain 12822 / ATCC BAA-587 / NCTC 13253), this protein is Isocitrate dehydrogenase kinase/phosphatase.